We begin with the raw amino-acid sequence, 380 residues long: MSAVNGTPWGSSAREEVWAGSGVEVEGSELPTFSTAAKVRVGVTIVLFVSSAGGNLAVLWSVTRPQPSQLRPSPVRRLFAHLAAADLLVTFVVMPLDATWNITVQWLAGDIACRTLMFLKLMAMYAAAFLPVVIGLDRQAAVLNPLGSRSGVRKLLGAAWGLSFLLALPQLFLFHTVHRAGPVPFTQCATKGSFKARWQETTYNLFTFCCLFLLPLTAMAICYSRIVLGVSSPRTRKGSHAPAGEFALRRSFDNRPRVRLRALRLALLVLLTFILCWTPYYLLGLWYWFSPSMLSEVPPSLSHILFLFGLLNAPLDPLLYGAFTLGCRRGHQELSMDSSREEGSRRMFQQDIQALRQTEVQKTVTSRKAGETKDIPITSI.

The Extracellular portion of the chain corresponds to 1-40 (MSAVNGTPWGSSAREEVWAGSGVEVEGSELPTFSTAAKVR). Residues 41 to 60 (VGVTIVLFVSSAGGNLAVLW) traverse the membrane as a helical segment. The Cytoplasmic portion of the chain corresponds to 61–76 (SVTRPQPSQLRPSPVR). A helical transmembrane segment spans residues 77–96 (RLFAHLAAADLLVTFVVMPL). The Extracellular portion of the chain corresponds to 97–114 (DATWNITVQWLAGDIACR). Asn-101 is a glycosylation site (N-linked (GlcNAc...) asparagine). An intrachain disulfide couples Cys-113 to Cys-188. Residues 115–136 (TLMFLKLMAMYAAAFLPVVIGL) form a helical membrane-spanning segment. The Cytoplasmic segment spans residues 137–160 (DRQAAVLNPLGSRSGVRKLLGAAW). The helical transmembrane segment at 161–178 (GLSFLLALPQLFLFHTVH) threads the bilayer. Residues 179–204 (RAGPVPFTQCATKGSFKARWQETTYN) are Extracellular-facing. A helical transmembrane segment spans residues 205-224 (LFTFCCLFLLPLTAMAICYS). Topologically, residues 225–278 (RIVLGVSSPRTRKGSHAPAGEFALRRSFDNRPRVRLRALRLALLVLLTFILCWT) are cytoplasmic. The helical transmembrane segment at 279–297 (PYYLLGLWYWFSPSMLSEV) threads the bilayer. The Extracellular segment spans residues 298 to 303 (PPSLSH). The helical transmembrane segment at 304–323 (ILFLFGLLNAPLDPLLYGAF) threads the bilayer. The Cytoplasmic segment spans residues 324 to 380 (TLGCRRGHQELSMDSSREEGSRRMFQQDIQALRQTEVQKTVTSRKAGETKDIPITSI).

The protein belongs to the G-protein coupled receptor 1 family. Phosphorylated on the C-terminal cytoplasmic tail.

It is found in the cell membrane. Functionally, receptor for gonadotropin releasing hormone II (GnRH II). This receptor mediates its action by association with G proteins that activate a phosphatidylinositol-calcium second messenger system. The chain is Gonadotropin-releasing hormone II receptor (GNRHR2) from Callithrix jacchus (White-tufted-ear marmoset).